Here is a 67-residue protein sequence, read N- to C-terminus: DNA-directed RNA polymerase subunit omega (67 aa).

This sequence belongs to the RNA polymerase subunit omega family. As to quaternary structure, the RNAP catalytic core consists of 2 alpha, 1 beta, 1 beta' and 1 omega subunit. When a sigma factor is associated with the core the holoenzyme is formed, which can initiate transcription.

The enzyme catalyses RNA(n) + a ribonucleoside 5'-triphosphate = RNA(n+1) + diphosphate. Promotes RNA polymerase assembly. Latches the N- and C-terminal regions of the beta' subunit thereby facilitating its interaction with the beta and alpha subunits. This is DNA-directed RNA polymerase subunit omega from Delftia acidovorans (strain DSM 14801 / SPH-1).